The chain runs to 204 residues: Copper-binding protein CutI (204 aa).

A signal peptide spans 1-26 (MLKKIALTLCPAIVGSLLFFTAPASA). 2 residues coordinate Cu(2+): His-27 and Glu-50. Residues 27-178 (HVSVKPAESA…DDSENSGSSA (152 aa)) are Extracellular-facing. The disordered stretch occupies residues 146–176 (PHSITNITSAKQVTDEHGATKTEDDSENSGS). Polar residues predominate over residues 147–157 (HSITNITSAKQ). The segment covering 158–168 (VTDEHGATKTE) has biased composition (basic and acidic residues). The helical transmembrane segment at 179–199 (LDITAMVLSAAAIILSVAALV) threads the bilayer. The Cytoplasmic segment spans residues 200–204 (KKKRA).

Its subcellular location is the cell membrane. In terms of biological role, copper-binding protein that probably plays a role in copper homeostasis. May act as metallochaperone, possibly to facilitate copper uptake via the CutJ/YcnJ importer. Preferentially binds Cu in its oxidized Cu(II) state in a 1:1 stoichiometry. The protein is Copper-binding protein CutI of Bacillus subtilis (strain 168).